The primary structure comprises 173 residues: RNA pyrophosphohydrolase (173 aa).

The 144-residue stretch at 6-149 (GFRANVGIII…KRDVYRKVMK (144 aa)) folds into the Nudix hydrolase domain. Positions 38–59 (GGVDEGESAEEAMYRELYEEVG) match the Nudix box motif.

Belongs to the Nudix hydrolase family. RppH subfamily. A divalent metal cation serves as cofactor.

Its function is as follows. Accelerates the degradation of transcripts by removing pyrophosphate from the 5'-end of triphosphorylated RNA, leading to a more labile monophosphorylated state that can stimulate subsequent ribonuclease cleavage. The sequence is that of RNA pyrophosphohydrolase from Shewanella piezotolerans (strain WP3 / JCM 13877).